Reading from the N-terminus, the 274-residue chain is NH(3)-dependent NAD(+) synthetase (274 aa).

ATP is bound at residue 27–34 (GLSGGIDS). D33 serves as a coordination point for Mg(2+). R121 provides a ligand contact to deamido-NAD(+). Position 141 (T141) interacts with ATP. Residue E146 coordinates Mg(2+). Residues K170 and S192 each coordinate ATP.

Belongs to the NAD synthetase family. In terms of assembly, homodimer.

It carries out the reaction deamido-NAD(+) + NH4(+) + ATP = AMP + diphosphate + NAD(+) + H(+). It functions in the pathway cofactor biosynthesis; NAD(+) biosynthesis; NAD(+) from deamido-NAD(+) (ammonia route): step 1/1. Its function is as follows. Catalyzes the ATP-dependent amidation of deamido-NAD to form NAD. Uses ammonia as a nitrogen source. This chain is NH(3)-dependent NAD(+) synthetase, found in Helicobacter hepaticus (strain ATCC 51449 / 3B1).